The primary structure comprises 252 residues: Phosphate import ATP-binding protein PstB 1 (252 aa).

The region spanning 6–247 (LQIRDLSVYY…PKRKETEDYI (242 aa)) is the ABC transporter domain. An ATP-binding site is contributed by 38 to 45 (GPSGSGKS).

This sequence belongs to the ABC transporter superfamily. Phosphate importer (TC 3.A.1.7) family. In terms of assembly, the complex is composed of two ATP-binding proteins (PstB), two transmembrane proteins (PstC and PstA) and a solute-binding protein (PstS).

It localises to the cell membrane. It carries out the reaction phosphate(out) + ATP + H2O = ADP + 2 phosphate(in) + H(+). Functionally, part of the ABC transporter complex PstSACB involved in phosphate import. Responsible for energy coupling to the transport system. The polypeptide is Phosphate import ATP-binding protein PstB 1 (Streptococcus pyogenes serotype M1).